The primary structure comprises 390 residues: UPF0229 protein ABC1477 (390 aa).

2 disordered regions span residues 1–31 (MEKDNGRQFTISQENWSLHRKGFQDQRRHQE) and 81–118 (VGQGKGDSKIGDIVARDPNGDKQAGAGKGSGAGDQAGE). Residues 7–16 (RQFTISQENW) show a composition bias toward polar residues. Basic and acidic residues-rich tracts occupy residues 22 to 31 (GFQDQRRHQE) and 86 to 100 (GDSKIGDIVARDPNG).

Belongs to the UPF0229 family.

The protein is UPF0229 protein ABC1477 of Shouchella clausii (strain KSM-K16) (Alkalihalobacillus clausii).